The chain runs to 230 residues: uncharacterized protein (230 aa).

This is an uncharacterized protein from Encephalitozoon cuniculi (strain GB-M1) (Microsporidian parasite).